A 444-amino-acid polypeptide reads, in one-letter code: Spermidine/putrescine import ATP-binding protein PotA (444 aa).

The ABC transporter domain occupies 11–332; that stretch reads ISLVDVDKEF…PVNKWVANFI (322 aa). Residue 43–50 coordinates ATP; the sequence is GPSGSGKT. Residues 111–201 are insert; that stretch reads RIKKKAEEIP…ESFKKKYLTR (91 aa).

It belongs to the ABC transporter superfamily. Spermidine/putrescine importer (TC 3.A.1.11.1) family. As to quaternary structure, the complex is composed of two ATP-binding proteins (PotA), two transmembrane proteins (PotB and PotC) and a solute-binding protein (PotD).

The protein resides in the cell membrane. It carries out the reaction ATP + H2O + polyamine-[polyamine-binding protein]Side 1 = ADP + phosphate + polyamineSide 2 + [polyamine-binding protein]Side 1.. In terms of biological role, part of the ABC transporter complex PotABCD involved in spermidine/putrescine import. Responsible for energy coupling to the transport system. The sequence is that of Spermidine/putrescine import ATP-binding protein PotA from Mesomycoplasma hyopneumoniae (strain J / ATCC 25934 / NCTC 10110) (Mycoplasma hyopneumoniae).